An 862-amino-acid chain; its full sequence is Short transient receptor potential channel 7 (862 aa).

Residues 1-21 are disordered; sequence MLGSNTFKNMQRRHTTLREKG. Residues 1-351 are Cytoplasmic-facing; it reads MLGSNTFKNM…GLRQQSIAVK (351 aa). A compositionally biased stretch (basic residues) spans 10–21; the sequence is MQRRHTTLREKG. Position 15 is a phosphothreonine; by PKG/PRKG1 (Thr15). 4 ANK repeats span residues 42 to 71, 77 to 106, 108 to 134, and 163 to 192; these read PEEE…TLNF, MGQN…LARV, DALL…FAQG, and HDIT…RIER. Residues 352-372 form a helical membrane-spanning segment; the sequence is FLAVFGVSIGLPFLAIAYWIA. Residues 373–383 lie on the Extracellular side of the membrane; the sequence is PCSKLGQTLRS. Residues 384-404 traverse the membrane as a helical segment; the sequence is PFMKFVAHAVSFTIFLGLLVV. The Cytoplasmic segment spans residues 405–465; it reads NASDRFEGVK…KEIWEEGPRE (61 aa). A helical transmembrane segment spans residues 466–486; sequence YVLHLWNLLDFGMLSIFVASF. Residues 487–537 are Extracellular-facing; it reads TARFMAFLKASEAQLYVDQYVQDVTLHNVSLPPEVAYFTYARDKWWPSDPQ. Residue Asn514 is glycosylated (N-linked (GlcNAc...) asparagine). Residues 538 to 558 traverse the membrane as a helical segment; it reads IISEGLYAIAVVLSFSRIAYI. Residues 559 to 581 are Cytoplasmic-facing; it reads LPANESFGPLQISLGRTVKDIFK. A helical membrane pass occupies residues 582–602; it reads FMVIFIMVFVAFMIGMFNLYS. Residues 603 to 651 are Extracellular-facing; that stretch reads YYRGAKYNPAFTTVEESFKTLFWSIFGLSEVISVVLKYDHKFIENIGYV. A helical membrane pass occupies residues 652–672; the sequence is LYGVYNVTMVVVLLNMLIAMI. The Cytoplasmic portion of the chain corresponds to 673-862; sequence NNSYQEIEED…HLRVNQGKDI (190 aa).

This sequence belongs to the transient receptor (TC 1.A.4) family. STrpC subfamily. TRPC7 sub-subfamily. As to quaternary structure, interacts with MX1 and RNF24. Interacts (via ANK-repeat domains) with PRKG1. Post-translationally, phosphorylation by PRKG1 at Thr-15 negatively regulates TRPC7 activity.

The protein localises to the cell membrane. The protein resides in the nucleus envelope. It catalyses the reaction Ca(2+)(in) = Ca(2+)(out). Forms a receptor-activated non-selective calcium permeant cation channel. Probably is operated by a phosphatidylinositol second messenger system activated by receptor tyrosine kinases or G-protein coupled receptors. Activated by diacylglycerol (DAG). May also be activated by intracellular calcium store depletion. The chain is Short transient receptor potential channel 7 (Trpc7) from Mus musculus (Mouse).